The primary structure comprises 625 residues: SWR1-complex protein 3 (625 aa).

Disordered regions lie at residues 1–53, 194–234, 254–273, and 324–434; these read MPAV…EVGN, KELK…KENK, KLKE…MHDP, and NPVN…NAIK. The segment covering 20-31 has biased composition (basic residues); the sequence is SRTRTRSRRGKR. A compositionally biased stretch (acidic residues) spans 35–53; the sequence is DDDDDDDEESDDAYDEVGN. Basic and acidic residues-rich tracts occupy residues 194-214 and 221-234; these read KELK…ERKR and IAKE…KENK. Polar residues predominate over residues 261–270; sequence NKQGSPSSSM. A compositionally biased stretch (basic and acidic residues) spans 342 to 352; sequence KAKDVAEDHRL. The segment covering 353-364 has biased composition (polar residues); that stretch reads NSITLVKSSKTA. Composition is skewed to basic and acidic residues over residues 368 to 388 and 396 to 420; these read PEPK…EAKT and DVKK…KEDN.

Belongs to the SWC3 family. Component of the SWR1 chromatin remodeling complex composed of at least ACT1, ARP4, RVB1, RVB2, ARP6, YAF9, VPS71, VPS72, SWC3, SWC4, SWC5, SWC7 and SWR1, and perhaps BDF1.

It is found in the nucleus. Its function is as follows. Component of the SWR1 complex which mediates the ATP-dependent exchange of histone H2A for the H2A variant HZT1 leading to transcriptional regulation of selected genes by chromatin remodeling. Involved in chromosome stability. This is SWR1-complex protein 3 (SWC3) from Saccharomyces cerevisiae (strain ATCC 204508 / S288c) (Baker's yeast).